Reading from the N-terminus, the 72-residue chain is Small ribosomal subunit protein bS18 (72 aa).

Belongs to the bacterial ribosomal protein bS18 family. As to quaternary structure, part of the 30S ribosomal subunit. Forms a tight heterodimer with protein bS6.

Its function is as follows. Binds as a heterodimer with protein bS6 to the central domain of the 16S rRNA, where it helps stabilize the platform of the 30S subunit. This chain is Small ribosomal subunit protein bS18, found in Francisella philomiragia subsp. philomiragia (strain ATCC 25017 / CCUG 19701 / FSC 153 / O#319-036).